Here is a 318-residue protein sequence, read N- to C-terminus: Cuticle collagen dpy-7 (318 aa).

Triple-helical region stretches follow at residues 101–130 (GPIG…DGLD), 147–206 (GPPG…PGDD), 209–235 (GGTG…NGLP), and 240–278 (GPPG…PGGH). A disordered region spans residues 101 to 318 (GPIGPPGVSG…GYSGGGYGKK (218 aa)). Residues 187–204 (PQGEPGEQGEPGIKGPPG) are compositionally biased toward low complexity. 2 stretches are compositionally biased toward pro residues: residues 216-228 (PPGP…PKGP) and 250-268 (PPGP…PFGP). Residues 309 to 318 (GYSGGGYGKK) show a composition bias toward gly residues.

It belongs to the cuticular collagen family. Collagen polypeptide chains are complexed within the cuticle by disulfide bonds and other types of covalent cross-links.

In terms of biological role, nematode cuticles are composed largely of collagen-like proteins. The cuticle functions both as an exoskeleton and as a barrier to protect the worm from its environment. Mutations in dpy-7 affects the body shape. This Caenorhabditis elegans protein is Cuticle collagen dpy-7 (dpy-7).